A 132-amino-acid polypeptide reads, in one-letter code: Small ribosomal subunit protein uS8 (132 aa).

It belongs to the universal ribosomal protein uS8 family. In terms of assembly, part of the 30S ribosomal subunit. Contacts proteins S5 and S12.

One of the primary rRNA binding proteins, it binds directly to 16S rRNA central domain where it helps coordinate assembly of the platform of the 30S subunit. In Geotalea uraniireducens (strain Rf4) (Geobacter uraniireducens), this protein is Small ribosomal subunit protein uS8.